The following is a 640-amino-acid chain: UvrABC system protein C (640 aa).

The 80-residue stretch at asparagine 22–valine 101 folds into the GIY-YIG domain. In terms of domain architecture, UVR spans aspartate 211–leucine 246.

It belongs to the UvrC family. Interacts with UvrB in an incision complex.

It is found in the cytoplasm. Its function is as follows. The UvrABC repair system catalyzes the recognition and processing of DNA lesions. UvrC both incises the 5' and 3' sides of the lesion. The N-terminal half is responsible for the 3' incision and the C-terminal half is responsible for the 5' incision. This Prochlorococcus marinus (strain NATL2A) protein is UvrABC system protein C.